A 1484-amino-acid polypeptide reads, in one-letter code: Cystic fibrosis transmembrane conductance regulator (1484 aa).

The Cytoplasmic portion of the chain corresponds to 1–77 (MQRSPLEKAS…KLINALRRCF (77 aa)). The chain crosses the membrane as a helical span at residues 78-98 (FWRFMFYGIILYLGEVTKSVQ). The ABC transmembrane type-1 1 domain maps to 81 to 365 (FMFYGIILYL…WAVQTWYDSL (285 aa)). Residues 99-122 (PLLLGRIIASYDPDNKEERSIAIY) lie on the Extracellular side of the membrane. The helical transmembrane segment at 123 to 146 (LGIGLCLLFVMRTLLLHPAIFGLH) threads the bilayer. Residues 147 to 195 (RIGMQMRIAMFSLIYKKTLKLSSRVLDKISIGQLVSLLSNNLNKFDEGL) lie on the Cytoplasmic side of the membrane. A helical transmembrane segment spans residues 196 to 216 (ALAHFVWIAPLQVTLLMGLLW). The Extracellular portion of the chain corresponds to 217-222 (DLLQAS). A helical transmembrane segment spans residues 223-243 (AFCGLAFLIVLALFQAGLGRM). Residues 244–298 (MMKYRDQRAGKINERLVITSEMIENIQSVKAYCWEEAMEKMIESIRQTELKLTRK) are Cytoplasmic-facing. A helical transmembrane segment spans residues 299-319 (AAYVRYFNSSAFFFSGFFVVF). The Extracellular segment spans residues 320–339 (LSVLPYALIKTIVLRKIFTT). Residues 340–358 (ISFCIVLRMAVTRQFPWAV) form a helical membrane-spanning segment. Topologically, residues 359–860 (QTWYDSLGAI…YLRYVTIHKS (502 aa)) are cytoplasmic. Residues tryptophan 401, serine 434, 458–465 (GSTGAGKT), and glutamine 493 contribute to the ATP site. Positions 423 to 646 (NADNSLFFSN…RPDFSSKLMG (224 aa)) constitute an ABC transporter 1 domain. Residue cysteine 524 is the site of S-palmitoyl cysteine attachment. Serine 549 and serine 660 each carry phosphoserine. The interval 654–833 (SAERRNSIIT…EEINEEDLKE (180 aa)) is disordered R region. Serine 670 is modified (phosphoserine; by PKA). At serine 686 the chain carries Phosphoserine. Residue lysine 688 forms a Glycyl lysine isopeptide (Lys-Gly) (interchain with G-Cter in ubiquitin) linkage. Residues serine 700 and serine 712 each carry the phosphoserine modification. Position 717 is a phosphothreonine (threonine 717). Serine 737, serine 769, serine 792, serine 797, and serine 815 each carry phosphoserine. The helical transmembrane segment at 861 to 881 (LVFVLIWCLVIFLAEVAISLV) threads the bilayer. The ABC transmembrane type-1 2 domain occupies 861-1157 (LVFVLIWCLV…AVNSSIDVDS (297 aa)). At 882 to 920 (VLWLLKKTASQDKGNSTQSINSSYTVIFTSTSTYYVFYI) the chain is on the extracellular side. 2 N-linked (GlcNAc...) asparagine glycosylation sites follow: asparagine 896 and asparagine 902. A discontinuously helical membrane pass occupies residues 921-941 (YVGVADTLLALGFFRGLPLVH). Over 942–992 (TLITVSKILHHKMLHAVLQAPMSTLNALKAGGILNRFSKDIAILDDLLPLT) the chain is Cytoplasmic. A helical membrane pass occupies residues 993-1013 (IFDFVQLLLIVIGAVTVVSAL). Topologically, residues 1014-1015 (QP) are extracellular. Residues 1016–1036 (YIFLATVPVIAAFIMLRAYFL) form a helical membrane-spanning segment. At 1037–1097 (HTSQQLKQLE…TANWFLYLST (61 aa)) the chain is on the cytoplasmic side. Residues 1098–1118 (LRWFQMRMEIIFVIFFIAITF) traverse the membrane as a helical segment. Residues 1119–1132 (ISILTTGEGVGAVG) lie on the Extracellular side of the membrane. A helical membrane pass occupies residues 1133–1153 (IILTLAMNIMGTLQWAVNSSI). Residues 1154-1484 (DVDSLMRSVS…TEEEVQETRL (331 aa)) are Cytoplasmic-facing. The ABC transporter 2 domain maps to 1214 to 1447 (MTVKDLTAKY…KSLFRQAISP (234 aa)). ATP contacts are provided by residues tyrosine 1223 and 1248 to 1255 (GRTGSGKS). Residues 1390–1484 (RTLKQAFADC…TEEEVQETRL (95 aa)) are interaction with GORASP2. Cysteine 1399 carries S-palmitoyl cysteine lipidation. Serine 1448 and serine 1460 each carry phosphoserine. Positions 1456-1465 (HRNSSKHKSR) are enriched in basic residues. The disordered stretch occupies residues 1456–1484 (HRNSSKHKSRSQIAALKEETEEEVQETRL). Positions 1474–1484 (ETEEEVQETRL) are enriched in acidic residues. Positions 1482 to 1484 (TRL) match the PDZ-binding motif.

It belongs to the ABC transporter superfamily. ABCC family. CFTR transporter (TC 3.A.1.202) subfamily. As to quaternary structure, monomer; does not require oligomerization for channel activity. May form oligomers in the membrane. Interacts with SLC26A3, SLC26A6 and NHERF1. Interacts with SHANK2. Interacts with MYO6. Interacts (via C-terminus) with GOPC (via PDZ domain); this promotes CFTR internalization and thereby decreases channel activity. Interacts with SLC4A7 through NHERF1. Found in a complex with MYO5B and RAB11A. Interacts with ANO1. Interacts with SLC26A8. Interacts with AHCYL1; the interaction increases CFTR activity. Interacts with CSE1L. The core-glycosylated form interacts with GORASP2 (via PDZ GRASP-type 1 domain) in respone to ER stress. Interacts with MARCHF2; the interaction leads to CFTR ubiqtuitination and degradation. Interacts with ADGRG2. N-glycosylated. Post-translationally, phosphorylated; cAMP treatment promotes phosphorylation and activates the channel. Dephosphorylation decreases the ATPase activity (in vitro). Phosphorylation at PKA sites activates the channel. Phosphorylation at PKC sites enhances the response to phosphorylation by PKA. Phosphorylated by AMPK; this inhibits channel activity. In terms of processing, ubiquitinated, leading to its degradation in the lysosome. Deubiquitination by USP10 in early endosomes enhances its endocytic recycling to the cell membrane. Ubiquitinated by RNF185 during ER stress. Ubiquitinated by MARCHF2.

It localises to the apical cell membrane. Its subcellular location is the early endosome membrane. The protein resides in the cell membrane. It is found in the recycling endosome membrane. The protein localises to the endoplasmic reticulum membrane. It localises to the nucleus. The catalysed reaction is ATP + H2O + closed Cl(-) channel = ADP + phosphate + open Cl(-) channel.. The enzyme catalyses chloride(in) = chloride(out). It catalyses the reaction hydrogencarbonate(in) = hydrogencarbonate(out). It carries out the reaction ATP + H2O = ADP + phosphate + H(+). Its function is as follows. Epithelial ion channel that plays an important role in the regulation of epithelial ion and water transport and fluid homeostasis. Mediates the transport of chloride ions across the cell membrane. Possesses an intrinsic ATPase activity and utilizes ATP to gate its channel; the passive flow of anions through the channel is gated by cycles of ATP binding and hydrolysis by the ATP-binding domains. The ion channel is also permeable to HCO(3)(-); selectivity depends on the extracellular chloride concentration. Exerts its function also by modulating the activity of other ion channels and transporters. Contributes to the regulation of the pH and the ion content of the epithelial fluid layer. Modulates the activity of the epithelial sodium channel (ENaC) complex, in part by regulating the cell surface expression of the ENaC complex. May regulate bicarbonate secretion and salvage in epithelial cells by regulating the transporter SLC4A7. Can inhibit the chloride channel activity of ANO1. Plays a role in the chloride and bicarbonate homeostasis during sperm epididymal maturation and capacitation. This is Cystic fibrosis transmembrane conductance regulator from Mustela putorius furo (European domestic ferret).